We begin with the raw amino-acid sequence, 245 residues long: Ureidoacrylate amidohydrolase RutB (245 aa).

D41 functions as the Proton acceptor in the catalytic mechanism. Residue K150 is part of the active site. C183 (nucleophile) is an active-site residue.

The protein belongs to the isochorismatase family. RutB subfamily.

The catalysed reaction is (Z)-3-ureidoacrylate + H2O + H(+) = (Z)-3-aminoacrylate + NH4(+) + CO2. The enzyme catalyses (Z)-3-ureidoacrylate + H2O = (Z)-3-aminoacrylate + carbamate + H(+). It carries out the reaction (Z)-2-methylureidoacrylate + H2O + H(+) = (Z)-2-methylaminoacrylate + NH4(+) + CO2. Hydrolyzes ureidoacrylate to form aminoacrylate and carbamate. The carbamate hydrolyzes spontaneously, thereby releasing one of the nitrogen atoms of the pyrimidine ring as ammonia and one of its carbon atoms as CO2. The protein is Ureidoacrylate amidohydrolase RutB of Pseudomonas syringae pv. syringae (strain B728a).